Reading from the N-terminus, the 242-residue chain is Probable transcriptional regulatory protein PXO_01555 (242 aa).

The protein belongs to the TACO1 family.

The protein localises to the cytoplasm. This Xanthomonas oryzae pv. oryzae (strain PXO99A) protein is Probable transcriptional regulatory protein PXO_01555.